The following is a 498-amino-acid chain: MEDKAQYVFALLGILATLYFVRWSTDPLRHIPAIGPSAPIVSYLSAYRYCRNAQSILQEGYHKYKVFRVSLVDRWVVVVSGADMNEELRKVPDTHVSFQEAADDLVQLKYTIAPDVNEHPIHTPVIRGPLTRNLGALFPDVVDEINVAFPELMPAAAKRGEWVAVSVRDTMGRIVSRASNRIFVGLPLCRNPDYLKTVVEFAFSVAKSRTIINAAPAVFRPIVGHFLPWAKRAVRNAGVHVKPLIRQRVSKMQDAGDDQTDKSCDYLMWLIEEAQKTKQNLDIVVQGILVSNFAAIHTSSNSITHSLLNLAAYPQHVQPLREEIEGIIKEYGWTKEAIGKMWKLDSFMRESQRLSGISGISVMRKVLQDITLSDGTYLPKGTLVVAAAFATHTDERYYENPEVFEPFRFYDMRTENDALRKQYVNTSREFITFGHGKHACPGRFFAVNELKAMMAYIILHYDVKLEEGVSRPENVWIWHNISPASTKVLFRERQSKVQ.

The chain crosses the membrane as a helical span at residues 7–24 (YVFALLGILATLYFVRWS). N425 carries N-linked (GlcNAc...) asparagine glycosylation. Heme is bound at residue C440.

Belongs to the cytochrome P450 family. Heme serves as cofactor.

It localises to the membrane. It participates in secondary metabolite biosynthesis. Functionally, cytochrome P450 monooxygenase that is able to use dehydroabietic acid and testosterone as substrates for oxidation, suggesting that the natural substrate(s) may be structurally related to steroid compounds. The polypeptide is Cytochrome P450 monooxygenase 71 (Postia placenta (strain ATCC 44394 / Madison 698-R) (Brown rot fungus)).